Consider the following 80-residue polypeptide: U-scoloptoxin(15)-Er1a (80 aa).

The first 22 residues, 1-22 (MQNKGVVLTLFLVVSMAIVISS), serve as a signal peptide directing secretion.

It belongs to the scoloptoxin-15 family. Post-translationally, contains 2 disulfide bonds. Expressed by the venom gland.

Its subcellular location is the secreted. This chain is U-scoloptoxin(15)-Er1a, found in Ethmostigmus rubripes (Giant centipede).